We begin with the raw amino-acid sequence, 360 residues long: Phosphoserine aminotransferase (360 aa).

Arg-42 is an L-glutamate binding site. Residues 76 to 77 (AR), Trp-102, Thr-152, Asp-172, and Gln-195 each bind pyridoxal 5'-phosphate. Lys-196 is modified (N6-(pyridoxal phosphate)lysine). 237-238 (NT) is a pyridoxal 5'-phosphate binding site.

It belongs to the class-V pyridoxal-phosphate-dependent aminotransferase family. SerC subfamily. Homodimer. The cofactor is pyridoxal 5'-phosphate.

The protein localises to the cytoplasm. It catalyses the reaction O-phospho-L-serine + 2-oxoglutarate = 3-phosphooxypyruvate + L-glutamate. The catalysed reaction is 4-(phosphooxy)-L-threonine + 2-oxoglutarate = (R)-3-hydroxy-2-oxo-4-phosphooxybutanoate + L-glutamate. It participates in amino-acid biosynthesis; L-serine biosynthesis; L-serine from 3-phospho-D-glycerate: step 2/3. The protein operates within cofactor biosynthesis; pyridoxine 5'-phosphate biosynthesis; pyridoxine 5'-phosphate from D-erythrose 4-phosphate: step 3/5. Its function is as follows. Catalyzes the reversible conversion of 3-phosphohydroxypyruvate to phosphoserine and of 3-hydroxy-2-oxo-4-phosphonooxybutanoate to phosphohydroxythreonine. The chain is Phosphoserine aminotransferase from Pasteurella multocida (strain Pm70).